The following is a 209-amino-acid chain: tRNA (guanine-N(7)-)-methyltransferase (209 aa).

Residues Asp-35, Glu-60, Asn-87, and Asp-113 each contribute to the S-adenosyl-L-methionine site. Residue Asp-113 is part of the active site. The substrate site is built by Lys-117 and Asp-149.

The protein belongs to the class I-like SAM-binding methyltransferase superfamily. TrmB family.

It catalyses the reaction guanosine(46) in tRNA + S-adenosyl-L-methionine = N(7)-methylguanosine(46) in tRNA + S-adenosyl-L-homocysteine. Its pathway is tRNA modification; N(7)-methylguanine-tRNA biosynthesis. In terms of biological role, catalyzes the formation of N(7)-methylguanine at position 46 (m7G46) in tRNA. This Prochlorococcus marinus (strain MIT 9215) protein is tRNA (guanine-N(7)-)-methyltransferase.